A 639-amino-acid polypeptide reads, in one-letter code: Protein sly1 homolog (639 aa).

A run of 4 repeats spans residues 85–121 (DENL…NLAA), 203–245 (RNSA…FSFQ), 423–460 (LDLL…ERLK), and 464–500 (QAAG…GGGT). The interval 85-500 (DENLDRIQQD…QATQYEGGGT (416 aa)) is 4 X approximate repeats.

It belongs to the STXBP/unc-18/SEC1 family. In embryos, from stage 14, expression is seen in posterior midgut, esophagus and salivary glands. No expression is seen in larval imaginal disks.

Its subcellular location is the cytoplasm. It is found in the membrane. Its function is as follows. Non-vital for development. The polypeptide is Protein sly1 homolog (Slh) (Drosophila melanogaster (Fruit fly)).